The chain runs to 1097 residues: DNA-directed RNA polymerase subunit beta (1097 aa).

Positions 1073–1097 are disordered; sequence DVNPRRSTPSRPTYESLGVADYDED.

It belongs to the RNA polymerase beta chain family. In cyanobacteria the RNAP catalytic core is composed of 2 alpha, 1 beta, 1 beta', 1 gamma and 1 omega subunit. When a sigma factor is associated with the core the holoenzyme is formed, which can initiate transcription.

It catalyses the reaction RNA(n) + a ribonucleoside 5'-triphosphate = RNA(n+1) + diphosphate. DNA-dependent RNA polymerase catalyzes the transcription of DNA into RNA using the four ribonucleoside triphosphates as substrates. The polypeptide is DNA-directed RNA polymerase subunit beta (Synechococcus sp. (strain CC9311)).